Here is a 448-residue protein sequence, read N- to C-terminus: Trigger factor (448 aa).

The PPIase FKBP-type domain occupies 162–243 (DDFAIIDIEA…VQQTKERKLP (82 aa)). The segment at 426–448 (DEGKAVDPSEYFGEEEESAEESE) is disordered. Positions 437 to 448 (FGEEEESAEESE) are enriched in acidic residues.

Belongs to the FKBP-type PPIase family. Tig subfamily.

Its subcellular location is the cytoplasm. The enzyme catalyses [protein]-peptidylproline (omega=180) = [protein]-peptidylproline (omega=0). In terms of biological role, involved in protein export. Acts as a chaperone by maintaining the newly synthesized protein in an open conformation. Functions as a peptidyl-prolyl cis-trans isomerase. This Corynebacterium diphtheriae (strain ATCC 700971 / NCTC 13129 / Biotype gravis) protein is Trigger factor.